We begin with the raw amino-acid sequence, 2326 residues long: Telomere-associated protein RIF1 (2326 aa).

Disordered regions lie at residues 381 to 410 (QGTP…SPAT), 1105 to 1965 (YTQS…CITP), and 1993 to 2050 (VENK…DDSL). The span at 382 to 396 (GTPSRVPSNPNSANP) shows a compositional bias: polar residues. Composition is skewed to basic and acidic residues over residues 1112–1126 (SLEK…EDFK) and 1150–1182 (CKVD…RGDR). The segment covering 1216–1225 (SAISCSSTSS) has biased composition (low complexity). Polar residues-rich tracts occupy residues 1233 to 1242 (QPASRRQSFI) and 1252 to 1270 (SRPF…SQSA). Basic and acidic residues predominate over residues 1290–1299 (KSGEESRKSS). Composition is skewed to polar residues over residues 1318–1332 (MEQQ…VTNS) and 1341–1353 (SFVS…SPES). A compositionally biased stretch (basic and acidic residues) spans 1376–1402 (PDIKKAEAVMAEIEKVRAFEMDSKENT). Residues 1403 to 1412 (PPKTAVSSEQ) are compositionally biased toward polar residues. Composition is skewed to basic and acidic residues over residues 1448 to 1480 (QDKE…DASQ), 1489 to 1511 (ASEH…DLGS), and 1519 to 1539 (GADE…KSDS). Over residues 1564 to 1573 (SSQGLLSSIE) the composition is skewed to polar residues. Residues 1586-1595 (SLKKKSGKTK) show a composition bias toward basic residues. Positions 1596 to 1609 (NKSDSLEGKRKDVQ) are enriched in basic and acidic residues. Composition is skewed to polar residues over residues 1610–1640 (PESQ…SEVS) and 1671–1683 (RTSP…SVEQ). The span at 1697-1712 (RVSDEVLKGDENKCIE) shows a compositional bias: basic and acidic residues. Positions 1713–1745 (KQSSVEQHSSVQPENVQGANTSGSDLSSLQMQD) are enriched in polar residues. Positions 1776–1785 (SKSEDPRELI) are enriched in basic and acidic residues. Over residues 1795–1813 (AVSTAEVSGSSNLEESLSI) the composition is skewed to polar residues. Basic and acidic residues-rich tracts occupy residues 1869–1884 (VEIK…DRAE), 1908–1925 (SEEK…HGEM), and 1932–1954 (DGSK…KEEA). The segment covering 2009-2036 (SFTSVNGSPSGVQARCTWSPSASPSTSI) has biased composition (polar residues).

This sequence belongs to the RIF1 family. As to quaternary structure, interacts with TP53BP1 (when phosphorylated by ATM).

The protein resides in the nucleus. It is found in the chromosome. Its subcellular location is the telomere. The protein localises to the cytoplasm. It localises to the cytoskeleton. The protein resides in the spindle. Key regulator of TP53BP1 that plays a key role in the repair of double-strand DNA breaks (DSBs) in response to DNA damage: acts by promoting non-homologous end joining (NHEJ)-mediated repair of DSBs. In response to DNA damage, interacts with ATM-phosphorylated TP53BP1, allowing recruitment to DNA DSBs. Once recruited to DSBs, RIF1 and TP53BP1 act by promoting NHEJ-mediated repair of DSBs. In the same time, RIF1 and TP53BP1 specifically counteract DSBs resection via homologous recombination (HR) during G1 phase. In Gallus gallus (Chicken), this protein is Telomere-associated protein RIF1.